The primary structure comprises 117 residues: UPF0145 protein CV_4322 (117 aa).

The protein belongs to the UPF0145 family.

In Chromobacterium violaceum (strain ATCC 12472 / DSM 30191 / JCM 1249 / CCUG 213 / NBRC 12614 / NCIMB 9131 / NCTC 9757 / MK), this protein is UPF0145 protein CV_4322.